A 259-amino-acid polypeptide reads, in one-letter code: Steroidogenic acute regulatory-like protein 1 (259 aa).

Positions 1–20 (MTLLPFTCLILLYSLGSVMS) are cleaved as a signal peptide. The 212-residue stretch at 43–254 (YATALKTCGE…NRRHFQNLKA (212 aa)) folds into the START domain.

The protein is Steroidogenic acute regulatory-like protein 1 (strl-1) of Caenorhabditis elegans.